Here is a 114-residue protein sequence, read N- to C-terminus: Iron-sulfur cluster insertion protein ErpA (114 aa).

Iron-sulfur cluster-binding residues include Cys-42, Cys-106, and Cys-108.

Belongs to the HesB/IscA family. In terms of assembly, homodimer. The cofactor is iron-sulfur cluster.

Functionally, required for insertion of 4Fe-4S clusters for at least IspG. The polypeptide is Iron-sulfur cluster insertion protein ErpA (Edwardsiella ictaluri (strain 93-146)).